The sequence spans 577 residues: Laccase-17 (577 aa).

Residues 1–22 (MALQLLLAVFSCVLLLPQPAFG) form the signal peptide. Plastocyanin-like domains lie at 30-146 (EIKM…PKRG) and 156-309 (KEVP…YEPP). N-linked (GlcNAc...) asparagine glycosylation is found at asparagine 35 and asparagine 76. Residues histidine 80 and histidine 82 each coordinate Cu cation. The N-linked (GlcNAc...) asparagine glycan is linked to asparagine 112. Residues histidine 125 and histidine 127 each contribute to the Cu cation site. Residues asparagine 185, asparagine 201, asparagine 237, asparagine 297, asparagine 335, asparagine 383, asparagine 391, asparagine 401, asparagine 437, asparagine 444, asparagine 450, and asparagine 460 are each glycosylated (N-linked (GlcNAc...) asparagine). Positions 427-561 (KFPWSPIVPF…RMAWLVLDGD (135 aa)) constitute a Plastocyanin-like 3 domain. Cu cation contacts are provided by histidine 478, histidine 481, histidine 483, histidine 540, cysteine 541, histidine 542, and histidine 546.

The protein belongs to the multicopper oxidase family. Requires Cu cation as cofactor. In terms of tissue distribution, ubiquitous with higher levels in the inflorescence stem.

Its subcellular location is the secreted. It is found in the extracellular space. The protein resides in the apoplast. It catalyses the reaction 4 hydroquinone + O2 = 4 benzosemiquinone + 2 H2O. Functionally, lignin degradation and detoxification of lignin-derived products. The chain is Laccase-17 (LAC17) from Arabidopsis thaliana (Mouse-ear cress).